The chain runs to 57 residues: UPF0391 membrane protein RPB_2510 (57 aa).

Helical transmembrane passes span 6–26 (WALI…TGIS) and 35–55 (ILFY…FTIF).

Belongs to the UPF0391 family.

It is found in the cell membrane. In Rhodopseudomonas palustris (strain HaA2), this protein is UPF0391 membrane protein RPB_2510.